Reading from the N-terminus, the 239-residue chain is Purine nucleoside phosphorylase DeoD-type (239 aa).

His5 contacts a purine D-ribonucleoside. Residues Gly21, Arg25, Arg44, and 88–91 (RVGS) each bind phosphate. A purine D-ribonucleoside-binding positions include 180 to 182 (EME) and 204 to 205 (SD). Catalysis depends on Asp205, which acts as the Proton donor.

This sequence belongs to the PNP/UDP phosphorylase family. As to quaternary structure, homohexamer; trimer of homodimers.

The catalysed reaction is a purine D-ribonucleoside + phosphate = a purine nucleobase + alpha-D-ribose 1-phosphate. The enzyme catalyses a purine 2'-deoxy-D-ribonucleoside + phosphate = a purine nucleobase + 2-deoxy-alpha-D-ribose 1-phosphate. Its function is as follows. Catalyzes the reversible phosphorolytic breakdown of the N-glycosidic bond in the beta-(deoxy)ribonucleoside molecules, with the formation of the corresponding free purine bases and pentose-1-phosphate. The sequence is that of Purine nucleoside phosphorylase DeoD-type from Salmonella arizonae (strain ATCC BAA-731 / CDC346-86 / RSK2980).